Consider the following 322-residue polypeptide: Ethylmalonyl-CoA decarboxylase (322 aa).

Lysine 232 is subject to N6-acetyllysine; alternate. Position 232 is an N6-succinyllysine; alternate (lysine 232). Position 316 is an N6-succinyllysine (lysine 316).

It belongs to the enoyl-CoA hydratase/isomerase family.

The protein resides in the cytoplasm. Its subcellular location is the cytosol. It carries out the reaction (2S)-ethylmalonyl-CoA + H(+) = butanoyl-CoA + CO2. It catalyses the reaction (S)-methylmalonyl-CoA + H(+) = propanoyl-CoA + CO2. The enzyme catalyses (2R)-ethylmalonyl-CoA + H(+) = butanoyl-CoA + CO2. Functionally, decarboxylates ethylmalonyl-CoA, a potentially toxic metabolite, to form butyryl-CoA, suggesting it might be involved in metabolite proofreading. Acts preferentially on (S)-ethylmalonyl-CoA but also has some activity on the (R)-isomer. Also has methylmalonyl-CoA decarboxylase activity at lower level. This chain is Ethylmalonyl-CoA decarboxylase (Echdc1), found in Mus musculus (Mouse).